The following is a 177-amino-acid chain: MKSRIHVQHGDITQLTVDVIVNAANASLLGGGGVDGAIHRAAGPTLLEACKKVRQQQGECPAGHAVITLAGNLPAKAVIHTVGPVWRGGDHNESQLLEDAYFNSLQLVLANGYRSVAFPAISTGAYGYPRPAAAEIAVNTVADFLARHALPEQVYFVCYDEETARLYERLLTQQGDE.

In terms of domain architecture, Macro spans 1–175 (MKSRIHVQHG…LYERLLTQQG (175 aa)). Substrate-binding positions include 11-12 (DI), N25, 33-35 (GVD), and 122-126 (STGAY). Residue D35 is the Proton acceptor of the active site.

It belongs to the MacroD-type family. YmdB subfamily. Homodimer. Interacts with RNase III.

The enzyme catalyses 3''-O-acetyl-ADP-D-ribose + H2O = ADP-D-ribose + acetate + H(+). It carries out the reaction 2''-O-acetyl-ADP-D-ribose + H2O = ADP-D-ribose + acetate + H(+). In terms of biological role, deacetylates O-acetyl-ADP ribose to yield ADP-ribose and free acetate. Down-regulates ribonuclease 3 (RNase III) activity. Acts by interacting directly with the region of the ribonuclease that is required for dimerization/activation. In Citrobacter koseri (strain ATCC BAA-895 / CDC 4225-83 / SGSC4696), this protein is O-acetyl-ADP-ribose deacetylase.